The chain runs to 540 residues: 2,3-bisphosphoglycerate-independent phosphoglycerate mutase (540 aa).

Mn(2+)-binding residues include aspartate 13 and serine 63. Serine 63 functions as the Phosphoserine intermediate in the catalytic mechanism. Substrate contacts are provided by residues histidine 124, 154–155, arginine 186, arginine 192, 262–265, and lysine 356; these read RD and RPDR. The Mn(2+) site is built by aspartate 423, histidine 427, aspartate 464, histidine 465, and histidine 483.

This sequence belongs to the BPG-independent phosphoglycerate mutase family. As to quaternary structure, monomer. Mn(2+) is required as a cofactor.

It carries out the reaction (2R)-2-phosphoglycerate = (2R)-3-phosphoglycerate. Its pathway is carbohydrate degradation; glycolysis; pyruvate from D-glyceraldehyde 3-phosphate: step 3/5. Catalyzes the interconversion of 2-phosphoglycerate and 3-phosphoglycerate. The sequence is that of 2,3-bisphosphoglycerate-independent phosphoglycerate mutase from Chloroflexus aurantiacus (strain ATCC 29366 / DSM 635 / J-10-fl).